Here is a 217-residue protein sequence, read N- to C-terminus: MKLILLGAPGAGKGTQATFICQKFGIPQISTGDMLRAAVKAGTPLGLEAKKVMDSGGLVSDDIIIGLVKERITQPDCANGFLFDGFPRTIPQADAMKAAGVKLDLVLEIDVPDEAIIERMSGRRVHVASGRTYHVKFNPPKVAGVDDVTGEPLIQRDDDKEATVLKRLQVYQSQTRPLVDYYAAWAATGDAAAPKYRKIAGTGSVDEITTRALAALA.

Residue 10–15 participates in ATP binding; that stretch reads GAGKGT. The NMP stretch occupies residues 30 to 59; it reads STGDMLRAAVKAGTPLGLEAKKVMDSGGLV. AMP is bound by residues Thr-31, Arg-36, 57–59, 85–88, and Gln-92; these read GLV and GFPR. Residues 122 to 159 form an LID region; sequence GRRVHVASGRTYHVKFNPPKVAGVDDVTGEPLIQRDDD. ATP-binding positions include Arg-123 and 132-133; that span reads TY. AMP contacts are provided by Arg-156 and Arg-167. Position 203 (Gly-203) interacts with ATP.

Belongs to the adenylate kinase family. Monomer.

The protein localises to the cytoplasm. It catalyses the reaction AMP + ATP = 2 ADP. It participates in purine metabolism; AMP biosynthesis via salvage pathway; AMP from ADP: step 1/1. In terms of biological role, catalyzes the reversible transfer of the terminal phosphate group between ATP and AMP. Plays an important role in cellular energy homeostasis and in adenine nucleotide metabolism. The sequence is that of Adenylate kinase from Methylibium petroleiphilum (strain ATCC BAA-1232 / LMG 22953 / PM1).